The sequence spans 133 residues: Small ribosomal subunit protein uS11 (133 aa).

It belongs to the universal ribosomal protein uS11 family. In terms of assembly, part of the 30S ribosomal subunit. Interacts with proteins S7 and S18. Binds to IF-3.

Functionally, located on the platform of the 30S subunit, it bridges several disparate RNA helices of the 16S rRNA. Forms part of the Shine-Dalgarno cleft in the 70S ribosome. This Bordetella petrii (strain ATCC BAA-461 / DSM 12804 / CCUG 43448) protein is Small ribosomal subunit protein uS11.